The chain runs to 192 residues: UPF0301 protein Bphyt_0868 (192 aa).

The protein belongs to the UPF0301 (AlgH) family.

The sequence is that of UPF0301 protein Bphyt_0868 from Paraburkholderia phytofirmans (strain DSM 17436 / LMG 22146 / PsJN) (Burkholderia phytofirmans).